Here is a 274-residue protein sequence, read N- to C-terminus: GATA transcription factor 1 (274 aa).

Disordered stretches follow at residues 1 to 39 (MEME…KTGL) and 102 to 132 (SPVS…TAVA). A Nuclear localization signal motif is present at residues 152 to 159 (KARSKRRR). The GATA-type zinc-finger motif lies at 190 to 244 (LIMGRKCQHCGAEKTPQWRAGPAGPKTLCNACGVRYKSGRLVPEYRPANSPTFTA).

It belongs to the type IV zinc-finger family. Class A subfamily. As to expression, mostly expressed in roots. Also expressed in stems, flowers and leaves.

The protein resides in the nucleus. Functionally, transcriptional activator that specifically binds 5'-GATA-3' or 5'-GAT-3' motifs within gene promoters. May be involved in the regulation of some light-responsive genes. In Arabidopsis thaliana (Mouse-ear cress), this protein is GATA transcription factor 1 (GATA1).